We begin with the raw amino-acid sequence, 155 residues long: Small ribosomal subunit protein uS7c (155 aa).

This sequence belongs to the universal ribosomal protein uS7 family. As to quaternary structure, part of the 30S ribosomal subunit.

Its subcellular location is the plastid. The protein localises to the chloroplast. Its function is as follows. One of the primary rRNA binding proteins, it binds directly to 16S rRNA where it nucleates assembly of the head domain of the 30S subunit. In Pinus koraiensis (Korean pine), this protein is Small ribosomal subunit protein uS7c (rps7).